Reading from the N-terminus, the 451-residue chain is Trigger factor (451 aa).

One can recognise a PPIase FKBP-type domain in the interval 165–250 (DDKLTIDFEG…LHQIQAREVL (86 aa)).

It belongs to the FKBP-type PPIase family. Tig subfamily.

It is found in the cytoplasm. It carries out the reaction [protein]-peptidylproline (omega=180) = [protein]-peptidylproline (omega=0). Its function is as follows. Involved in protein export. Acts as a chaperone by maintaining the newly synthesized protein in an open conformation. Functions as a peptidyl-prolyl cis-trans isomerase. The sequence is that of Trigger factor from Helicobacter acinonychis (strain Sheeba).